Reading from the N-terminus, the 199-residue chain is Nucleoside triphosphate pyrophosphatase (199 aa).

Residue aspartate 76 is the Proton acceptor of the active site.

It belongs to the Maf family. Requires a divalent metal cation as cofactor.

Its subcellular location is the cytoplasm. The enzyme catalyses a ribonucleoside 5'-triphosphate + H2O = a ribonucleoside 5'-phosphate + diphosphate + H(+). It carries out the reaction a 2'-deoxyribonucleoside 5'-triphosphate + H2O = a 2'-deoxyribonucleoside 5'-phosphate + diphosphate + H(+). Functionally, nucleoside triphosphate pyrophosphatase. May have a dual role in cell division arrest and in preventing the incorporation of modified nucleotides into cellular nucleic acids. In Ruegeria sp. (strain TM1040) (Silicibacter sp.), this protein is Nucleoside triphosphate pyrophosphatase.